A 190-amino-acid polypeptide reads, in one-letter code: Dynein axonemal light chain 1 (190 aa).

Ala2 is modified (N-acetylalanine). LRR repeat units lie at residues Asn49–Lys70, Asn71–Gly92, Thr94–Lys115, and Lys116–Ala137. Phosphoserine is present on Ser56. The region spanning Asn150–Asn190 is the LRRCT domain.

This sequence belongs to the dynein light chain LC1-type family. In terms of assembly, interacts with ZMYND10 (via C-terminus). Interacts with DNAH5, a outer arm dynein heavy chain. Interacts with tubulin located within the A-tubule of the outer doublets in a ATP-independent manner. Expressed in tissues carrying motile cilia such as respiratory epithelia, ependyma and testis.

The protein resides in the cytoplasm. It localises to the cytoskeleton. The protein localises to the cilium axoneme. Functionally, part of the multisubunit axonemal ATPase complexes that generate the force for cilia motility and govern beat frequency. Component of the outer arm dynein (ODA). May be involved in a mechanosensory feedback mechanism controlling ODA activity based on external conformational cues by tethering the outer arm dynein heavy chain (DNAH5) to the microtubule within the axoneme. Important for ciliary function in the airways and for the function of the cilia that produce the nodal flow essential for the determination of the left-right asymmetry. This chain is Dynein axonemal light chain 1, found in Homo sapiens (Human).